The following is a 279-amino-acid chain: Phosphonates import ATP-binding protein PhnC 2 (279 aa).

Residues 10-253 (LSLKGVSVRY…VARNLYAKQS (244 aa)) enclose the ABC transporter domain. 43-50 (GASGAGKS) is a binding site for ATP. Residues 253–262 (SNASNTSAST) are compositionally biased toward low complexity. Residues 253–279 (SNASNTSASTDSPRTLQSSQTKELLPC) form a disordered region. Residues 263-279 (DSPRTLQSSQTKELLPC) show a composition bias toward polar residues.

Belongs to the ABC transporter superfamily. Phosphonates importer (TC 3.A.1.9.1) family. In terms of assembly, the complex is composed of two ATP-binding proteins (PhnC), two transmembrane proteins (PhnE) and a solute-binding protein (PhnD).

It is found in the cell inner membrane. It carries out the reaction phosphonate(out) + ATP + H2O = phosphonate(in) + ADP + phosphate + H(+). Functionally, part of the ABC transporter complex PhnCDE involved in phosphonates import. Responsible for energy coupling to the transport system. This chain is Phosphonates import ATP-binding protein PhnC 2, found in Cupriavidus metallidurans (strain ATCC 43123 / DSM 2839 / NBRC 102507 / CH34) (Ralstonia metallidurans).